We begin with the raw amino-acid sequence, 585 residues long: Arginine--tRNA ligase (585 aa).

The 'HIGH' region motif lies at A131–H141.

This sequence belongs to the class-I aminoacyl-tRNA synthetase family. In terms of assembly, monomer.

Its subcellular location is the cytoplasm. It catalyses the reaction tRNA(Arg) + L-arginine + ATP = L-arginyl-tRNA(Arg) + AMP + diphosphate. The chain is Arginine--tRNA ligase from Rhizobium etli (strain ATCC 51251 / DSM 11541 / JCM 21823 / NBRC 15573 / CFN 42).